Consider the following 145-residue polypeptide: Large ribosomal subunit protein uL13 (145 aa).

This sequence belongs to the universal ribosomal protein uL13 family. In terms of assembly, part of the 50S ribosomal subunit.

Functionally, this protein is one of the early assembly proteins of the 50S ribosomal subunit, although it is not seen to bind rRNA by itself. It is important during the early stages of 50S assembly. The chain is Large ribosomal subunit protein uL13 from Bacillus thuringiensis (strain Al Hakam).